The following is a 154-amino-acid chain: Nucleoside diphosphate kinase A1 (154 aa).

ATP-binding residues include Lys-13, Phe-61, Arg-89, Thr-95, Arg-106, and Asn-116. His-119 (pros-phosphohistidine intermediate) is an active-site residue.

This sequence belongs to the NDK family. Mg(2+) is required as a cofactor.

It is found in the cytoplasm. It catalyses the reaction a 2'-deoxyribonucleoside 5'-diphosphate + ATP = a 2'-deoxyribonucleoside 5'-triphosphate + ADP. The catalysed reaction is a ribonucleoside 5'-diphosphate + ATP = a ribonucleoside 5'-triphosphate + ADP. In terms of biological role, major role in the synthesis of nucleoside triphosphates other than ATP. The ATP gamma phosphate is transferred to the NDP beta phosphate via a ping-pong mechanism, using a phosphorylated active-site intermediate. The protein is Nucleoside diphosphate kinase A1 of Xenopus laevis (African clawed frog).